We begin with the raw amino-acid sequence, 415 residues long: Glycerate 2-kinase (415 aa).

Lysine 57 serves as a coordination point for substrate.

It belongs to the glycerate kinase type-1 family. In terms of assembly, homodimer. Mg(2+) serves as cofactor. The cofactor is Ni(2+). It depends on Mn(2+) as a cofactor. Co(2+) is required as a cofactor.

It catalyses the reaction (R)-glycerate + ATP = (2R)-2-phosphoglycerate + ADP + H(+). In terms of biological role, catalyzes the ATP-dependent phosphorylation of D-glycerate to 2-phosphoglycerate. It can also partially utilize GTP, CTP or UTP as phosphate donor. This chain is Glycerate 2-kinase (gck), found in Picrophilus torridus (strain ATCC 700027 / DSM 9790 / JCM 10055 / NBRC 100828 / KAW 2/3).